A 599-amino-acid chain; its full sequence is Putative sensor histidine kinase NtrY-like (599 aa).

The next 4 membrane-spanning stretches (helical) occupy residues 17–37 (VLIF…FYVI), 44–64 (FSTI…LGVL), 85–105 (IVIA…VFSV), and 285–305 (IMFI…GVIF). Residues 307–361 (AKIVKPIKKLVTATDKVKDGDLTVQVPENEVDKDEIGTLYAAFNRMIKQLSRQQR) enclose the HAMP domain. Residues 378–589 (KVAHEIKNPL…IIDIKFDLKK (212 aa)) form the Histidine kinase domain. The residue at position 381 (histidine 381) is a Phosphohistidine; by autocatalysis.

The protein localises to the cell membrane. The catalysed reaction is ATP + protein L-histidine = ADP + protein N-phospho-L-histidine.. In terms of biological role, member of the two-component regulatory system RF_0427/RF_0895. In Rickettsia felis (strain ATCC VR-1525 / URRWXCal2) (Rickettsia azadi), this protein is Putative sensor histidine kinase NtrY-like.